A 388-amino-acid polypeptide reads, in one-letter code: 3-dehydroquinate synthase (388 aa).

NAD(+) is bound by residues D85–K90, G119–D123, T143–T144, K156, K165, and T183–T186. Zn(2+)-binding residues include E198, H261, and H278.

This sequence belongs to the sugar phosphate cyclases superfamily. Dehydroquinate synthase family. The cofactor is Co(2+). Zn(2+) is required as a cofactor. It depends on NAD(+) as a cofactor.

Its subcellular location is the cytoplasm. The catalysed reaction is 7-phospho-2-dehydro-3-deoxy-D-arabino-heptonate = 3-dehydroquinate + phosphate. Its pathway is metabolic intermediate biosynthesis; chorismate biosynthesis; chorismate from D-erythrose 4-phosphate and phosphoenolpyruvate: step 2/7. Catalyzes the conversion of 3-deoxy-D-arabino-heptulosonate 7-phosphate (DAHP) to dehydroquinate (DHQ). The polypeptide is 3-dehydroquinate synthase (Psychrobacter arcticus (strain DSM 17307 / VKM B-2377 / 273-4)).